The sequence spans 505 residues: Chemotaxis regulatory protein ChePep (505 aa).

Disordered regions lie at residues 154–403 (EPNN…EDIP) and 420–465 (EAVA…SSPL). Basic and acidic residues-rich tracts occupy residues 172-263 (EEVK…EKTQ), 289-311 (ENKE…EVVT), 337-346 (QAHELEKQEI), 359-373 (QDKE…KEET), and 386-398 (PQEK…HYES). Over residues 440–451 (TETSKNENNTET) the composition is skewed to low complexity.

Interacts with CheZ; the interaction is essential for each other polar localization.

It localises to the cytoplasm. Its function is as follows. Plays an essential role in chemotaxis. Regulates flagellar rotation through the formation of a complex with chemotaxis protein CheZ. Plays a major role in colonization of the stomach. The sequence is that of Chemotaxis regulatory protein ChePep from Helicobacter pylori (strain ATCC 700392 / 26695) (Campylobacter pylori).